The following is a 441-amino-acid chain: MSNVTHQPKIGFVSLGCPKNLVDSERILTELRTEGYDVVPHYDDADMVIVNTCGFIDSAVQESLEAIGEALNENGKVIVTGCLGAKEDQIREVHPKVLEITGPHSYEQVLQHVHHYVPKPKHNPFLSLVPEQGVKLTPRHYAYLKISEGCNHRCTFCIIPSMRGDLVSRPIGDVLSEAKRLVDAGVKEILVISQDTSAYGVDVKHRTGFHNGEPMKTSMVSLCEQLSKLGVWTRLHYVYPYPHVDDVIPLMAEGKILPYLDIPLQHASPRILKLMKRPGSVDRQLARIKQWREICPELTLRSTFIVGFPGETEEDFQMLLDFLKEARLDRVGCFKYSPVEGAGANELPDQVPEEVKEERWNRFMQLQQQISAERLQEKVGREILVIVDEVDEEGAIGRSMADAPEIDGAVYLNGETNVKPGDIVRVKVENADEYDLWGSRV.

The region spanning 8–118 (PKIGFVSLGC…VLQHVHHYVP (111 aa)) is the MTTase N-terminal domain. C17, C53, C82, C150, C154, and C157 together coordinate [4Fe-4S] cluster. The Radical SAM core domain maps to 136–373 (LTPRHYAYLK…MQLQQQISAE (238 aa)). One can recognise a TRAM domain in the interval 376 to 441 (QEKVGREILV…DEYDLWGSRV (66 aa)).

This sequence belongs to the methylthiotransferase family. RimO subfamily. Requires [4Fe-4S] cluster as cofactor.

It localises to the cytoplasm. The enzyme catalyses L-aspartate(89)-[ribosomal protein uS12]-hydrogen + (sulfur carrier)-SH + AH2 + 2 S-adenosyl-L-methionine = 3-methylsulfanyl-L-aspartate(89)-[ribosomal protein uS12]-hydrogen + (sulfur carrier)-H + 5'-deoxyadenosine + L-methionine + A + S-adenosyl-L-homocysteine + 2 H(+). Its function is as follows. Catalyzes the methylthiolation of an aspartic acid residue of ribosomal protein uS12. The sequence is that of Ribosomal protein uS12 methylthiotransferase RimO from Salmonella typhi.